The chain runs to 547 residues: Chaperonin GroEL (547 aa).

ATP is bound by residues 30 to 33 (TLGP), Lys-51, 87 to 91 (DGTTT), Gly-415, and Asp-496.

Belongs to the chaperonin (HSP60) family. As to quaternary structure, forms a cylinder of 14 subunits composed of two heptameric rings stacked back-to-back. Interacts with the co-chaperonin GroES.

Its subcellular location is the cytoplasm. The catalysed reaction is ATP + H2O + a folded polypeptide = ADP + phosphate + an unfolded polypeptide.. Its function is as follows. Together with its co-chaperonin GroES, plays an essential role in assisting protein folding. The GroEL-GroES system forms a nano-cage that allows encapsulation of the non-native substrate proteins and provides a physical environment optimized to promote and accelerate protein folding. The polypeptide is Chaperonin GroEL (Mannheimia succiniciproducens (strain KCTC 0769BP / MBEL55E)).